The following is an 836-amino-acid chain: Probable ribonuclease ZC3H12B (836 aa).

A disordered region spans residues 1–92; it reads MTATAEVETP…SPCLDRPSFS (92 aa). Positions 8–28 are enriched in basic and acidic residues; the sequence is ETPKMEKSASKEEKQQPKQDS. Positions 35 to 46 are enriched in acidic residues; sequence DSEEWMSSESDP. Positions 50–60 are enriched in polar residues; the sequence is SLKSSDNSKSC. A compositionally biased stretch (basic residues) spans 70–80; the sequence is KEMHSKPHRQL. Residues 190–345 enclose the RNase NYN domain; that stretch reads LRPVVIDGSN…LGRHGPSLEN (156 aa). A C3H1-type zinc finger spans residues 355 to 380; sequence EHKKQPCPYGKKCTYGHKCKYYHPER.

It belongs to the ZC3H12 family. Mg(2+) is required as a cofactor.

May function as RNase and regulate the levels of target RNA species. This Homo sapiens (Human) protein is Probable ribonuclease ZC3H12B (ZC3H12B).